A 620-amino-acid polypeptide reads, in one-letter code: Glutathione-regulated potassium-efflux system protein KefC (620 aa).

Helical transmembrane passes span histidine 4–valine 24, leucine 26–leucine 46, serine 54–leucine 74, glycine 90–leucine 110, valine 114–methionine 134, phenylalanine 149–leucine 169, methionine 178–leucine 198, valine 218–glycine 238, glycine 270–isoleucine 290, leucine 294–isoleucine 314, tryptophan 327–glutamine 347, and serine 359–asparagine 379. The RCK N-terminal domain maps to glutamine 399 to threonine 518. The tract at residues glycine 597 to serine 620 is disordered.

Belongs to the monovalent cation:proton antiporter 2 (CPA2) transporter (TC 2.A.37) family. KefC subfamily. In terms of assembly, homodimer. Interacts with the regulatory subunit KefF.

It is found in the cell inner membrane. Its function is as follows. Pore-forming subunit of a potassium efflux system that confers protection against electrophiles. Catalyzes K(+)/H(+) antiport. The protein is Glutathione-regulated potassium-efflux system protein KefC of Shigella flexneri serotype 5b (strain 8401).